A 404-amino-acid chain; its full sequence is MSAEREATEAATVAAAAEARAETGAGEGAPSQPPTVEVASDPQPPPAPEASASASAPPLRCLVLTGFGGYDKVKLQSRPAVPPAPGPGQVTLRVRACGLNFADLMGRQGLYDRLPPLPVTPGMEGAGVVVAVGEGVSDRKAGDRVMVLNRSGMWQEEVTVPSAQTFLMPEAMTFEEAAALLVNYITAYMVLFDFGNLRPGHSVLVHMAAGGVGMAALQLCRTVENVTVFGTASASKHEVLKENGVTHPIDYHTTDYVDEIKKISPKGVDIVMDPLGGSDTAKGYHLLKPMGKVVTYGMANLLTGPKRNLMAMARTWWNQFSVTALQLLQANRAVCGFHLGYLDGEVELVSRVVTHLLALYNQGHIKPRIDSVWPFEKVADAMRQMQEKKNIGKVLLVPGPEKET.

Residues 1-55 (MSAEREATEAATVAAAAEARAETGAGEGAPSQPPTVEVASDPQPPPAPEASASAS) are disordered. Position 2 is an N-acetylserine (Ser-2). Position 2 is a phosphoserine (Ser-2). Residues 9 to 24 (EAATVAAAAEARAETG) are compositionally biased toward low complexity. Phosphoserine occurs at positions 31 and 40.

Belongs to the zinc-containing alcohol dehydrogenase family. Quinone oxidoreductase subfamily. As to quaternary structure, interacts with MFN1 and MFN2. Ubiquitously expressed.

It localises to the cytoplasm. The protein localises to the mitochondrion outer membrane. Functionally, plays a part in calcium-regulated keratinocyte activation in epidermal repair mechanisms. Has no effect on cell proliferation. Possesses ATPase activity. May negatively regulate mitochondrial fusion. This chain is Synaptic vesicle membrane protein VAT-1 homolog (Vat1), found in Rattus norvegicus (Rat).